A 373-amino-acid polypeptide reads, in one-letter code: Queuine tRNA-ribosyltransferase (373 aa).

D90 serves as the catalytic Proton acceptor. Residues D90 to F94, D144, Q193, and G220 contribute to the substrate site. The tract at residues G251–D257 is RNA binding. Residue D270 is the Nucleophile of the active site. An RNA binding; important for wobble base 34 recognition region spans residues T275 to R279. C308, C310, C313, and H339 together coordinate Zn(2+).

The protein belongs to the queuine tRNA-ribosyltransferase family. As to quaternary structure, homodimer. Within each dimer, one monomer is responsible for RNA recognition and catalysis, while the other monomer binds to the replacement base PreQ1. Zn(2+) serves as cofactor.

The enzyme catalyses 7-aminomethyl-7-carbaguanine + guanosine(34) in tRNA = 7-aminomethyl-7-carbaguanosine(34) in tRNA + guanine. Its pathway is tRNA modification; tRNA-queuosine biosynthesis. In terms of biological role, catalyzes the base-exchange of a guanine (G) residue with the queuine precursor 7-aminomethyl-7-deazaguanine (PreQ1) at position 34 (anticodon wobble position) in tRNAs with GU(N) anticodons (tRNA-Asp, -Asn, -His and -Tyr). Catalysis occurs through a double-displacement mechanism. The nucleophile active site attacks the C1' of nucleotide 34 to detach the guanine base from the RNA, forming a covalent enzyme-RNA intermediate. The proton acceptor active site deprotonates the incoming PreQ1, allowing a nucleophilic attack on the C1' of the ribose to form the product. After dissociation, two additional enzymatic reactions on the tRNA convert PreQ1 to queuine (Q), resulting in the hypermodified nucleoside queuosine (7-(((4,5-cis-dihydroxy-2-cyclopenten-1-yl)amino)methyl)-7-deazaguanosine). This Campylobacter jejuni subsp. jejuni serotype O:23/36 (strain 81-176) protein is Queuine tRNA-ribosyltransferase.